The sequence spans 149 residues: MSGTSARDATLLAFDYGEKRIGVAIGNALTRSARALVVIPNLNREHRFKAVGELLAEWRPDALVVGLPMHPDGTPHDMTQQAKRFGNQLNGRFGLPVTWVDERYSSVEAEAGMRERNVRGRARTDMLDAEAARVILQQYLDQLSDHEPH.

The protein belongs to the YqgF nuclease family.

It is found in the cytoplasm. Its function is as follows. Could be a nuclease involved in processing of the 5'-end of pre-16S rRNA. The protein is Putative pre-16S rRNA nuclease of Burkholderia multivorans (strain ATCC 17616 / 249).